An 833-amino-acid chain; its full sequence is Multiple RNA-binding domain-containing protein 1 (833 aa).

The 82-residue stretch at 2–83 folds into the RRM 1 domain; sequence SRIIIKNIPR…SRIEVHRALD (82 aa). The tract at residues 160–251 is disordered; it reads ENEEVFDTEI…DAQAPLSDDE (92 aa). Composition is skewed to basic and acidic residues over residues 188–205 and 213–222; these read AAKRHEGDSIKSTEHDST and DGREKSSSEL. RRM domains follow at residues 323–401, 506–578, 619–702, and 721–798; these read KRLF…PAKA, NVLL…KAPR, ATIY…LSHQ, and TKIL…YASN.

The protein belongs to the RRM MRD1 family.

It is found in the nucleus. Functionally, involved in pre-rRNA processing. This is Multiple RNA-binding domain-containing protein 1 (mrd1) from Schizosaccharomyces pombe (strain 972 / ATCC 24843) (Fission yeast).